A 186-amino-acid polypeptide reads, in one-letter code: ATP synthase subunit b (186 aa).

The chain crosses the membrane as a helical span at residues 25 to 45; it reads IVWSVVCVAIIAVVFYKYVIP.

Belongs to the ATPase B chain family. In terms of assembly, F-type ATPases have 2 components, F(1) - the catalytic core - and F(0) - the membrane proton channel. F(1) has five subunits: alpha(3), beta(3), gamma(1), delta(1), epsilon(1). F(0) has three main subunits: a(1), b(2) and c(10-14). The alpha and beta chains form an alternating ring which encloses part of the gamma chain. F(1) is attached to F(0) by a central stalk formed by the gamma and epsilon chains, while a peripheral stalk is formed by the delta and b chains.

It is found in the cell membrane. Its function is as follows. F(1)F(0) ATP synthase produces ATP from ADP in the presence of a proton or sodium gradient. F-type ATPases consist of two structural domains, F(1) containing the extramembraneous catalytic core and F(0) containing the membrane proton channel, linked together by a central stalk and a peripheral stalk. During catalysis, ATP synthesis in the catalytic domain of F(1) is coupled via a rotary mechanism of the central stalk subunits to proton translocation. In terms of biological role, component of the F(0) channel, it forms part of the peripheral stalk, linking F(1) to F(0). The sequence is that of ATP synthase subunit b from Nocardia farcinica (strain IFM 10152).